Here is a 173-residue protein sequence, read N- to C-terminus: NADH-ubiquinone oxidoreductase chain 6 (173 aa).

5 helical membrane-spanning segments follow: residues 1–21 (MTYF…AVAS), 27–47 (YGVV…LSLG), 48–68 (VSFV…VVFV), 87–107 (VVGY…VGGL), and 139–159 (CGVG…FVVL).

This sequence belongs to the complex I subunit 6 family.

The protein resides in the mitochondrion membrane. The catalysed reaction is a ubiquinone + NADH + 5 H(+)(in) = a ubiquinol + NAD(+) + 4 H(+)(out). Its function is as follows. Core subunit of the mitochondrial membrane respiratory chain NADH dehydrogenase (Complex I) that is believed to belong to the minimal assembly required for catalysis. Complex I functions in the transfer of electrons from NADH to the respiratory chain. The immediate electron acceptor for the enzyme is believed to be ubiquinone. This Larus canus (Common gull) protein is NADH-ubiquinone oxidoreductase chain 6 (MT-ND6).